The chain runs to 418 residues: cAMP-dependent protein kinase type II-beta regulatory subunit (418 aa).

The segment at 2–153 (SIEIPAGLTE…RLQEACKDIL (152 aa)) is dimerization and phosphorylation. Positions 48-57 (TARFGHEGRT) are enriched in basic and acidic residues. Positions 48–96 (TARFGHEGRTWGDLGAAAGGGTPSKGVNFAEEPMQSDSEDGEEEEAAPA) are disordered. Phosphothreonine is present on Thr69. Phosphoserine is present on residues Ser83, Ser85, and Ser114. Acidic residues predominate over residues 84–94 (DSEDGEEEEAA). Residues 154-275 (LFKN…ESLP), Glu223, Arg232, 276-418 (FLKS…EPTA), Glu352, and Arg361 contribute to the 3',5'-cyclic AMP site.

It belongs to the cAMP-dependent kinase regulatory chain family. The inactive form of the enzyme is composed of two regulatory chains and two catalytic chains. Activation by cAMP produces two active catalytic monomers and a regulatory dimer that binds four cAMP molecules. Interacts with PRKACA and PRKACB. Interacts with the phosphorylated form of PJA2. Forms a complex composed of PRKAR2B, GSK3B and GSKIP through GSKIP interaction; facilitates PKA-induced phosphorylation and regulates GSK3B activity. Post-translationally, phosphorylated by the activated catalytic chain. Four types of regulatory chains are found: I-alpha, I-beta, II-alpha, and II-beta. Their expression varies among tissues and is in some cases constitutive and in others inducible.

The protein resides in the cytoplasm. The protein localises to the cell membrane. Its function is as follows. Regulatory subunit of the cAMP-dependent protein kinases involved in cAMP signaling in cells. Type II regulatory chains mediate membrane association by binding to anchoring proteins, including the MAP2 kinase. The protein is cAMP-dependent protein kinase type II-beta regulatory subunit (PRKAR2B) of Homo sapiens (Human).